A 360-amino-acid polypeptide reads, in one-letter code: Chorismate synthase (360 aa).

An NADP(+)-binding site is contributed by R47. Residues 124-126 (RSS), 240-241 (NA), G285, 300-304 (KPVAT), and R326 contribute to the FMN site.

This sequence belongs to the chorismate synthase family. As to quaternary structure, homotetramer. FMNH2 serves as cofactor.

The enzyme catalyses 5-O-(1-carboxyvinyl)-3-phosphoshikimate = chorismate + phosphate. The protein operates within metabolic intermediate biosynthesis; chorismate biosynthesis; chorismate from D-erythrose 4-phosphate and phosphoenolpyruvate: step 7/7. Its function is as follows. Catalyzes the anti-1,4-elimination of the C-3 phosphate and the C-6 proR hydrogen from 5-enolpyruvylshikimate-3-phosphate (EPSP) to yield chorismate, which is the branch point compound that serves as the starting substrate for the three terminal pathways of aromatic amino acid biosynthesis. This reaction introduces a second double bond into the aromatic ring system. This is Chorismate synthase from Cytophaga hutchinsonii (strain ATCC 33406 / DSM 1761 / CIP 103989 / NBRC 15051 / NCIMB 9469 / D465).